The primary structure comprises 503 residues: 3-octaprenyl-4-hydroxybenzoate carboxy-lyase (503 aa).

Asn-176 provides a ligand contact to Mn(2+). Residues Ile-179 to Arg-181, Arg-193 to Leu-195, and Arg-198 to Gly-199 contribute to the prenylated FMN site. Glu-242 lines the Mn(2+) pocket. The active-site Proton donor is Asp-303.

It belongs to the UbiD family. Homohexamer. The cofactor is prenylated FMN. Mn(2+) is required as a cofactor.

It is found in the cell membrane. The enzyme catalyses a 4-hydroxy-3-(all-trans-polyprenyl)benzoate + H(+) = a 2-(all-trans-polyprenyl)phenol + CO2. It functions in the pathway cofactor biosynthesis; ubiquinone biosynthesis. Catalyzes the decarboxylation of 3-octaprenyl-4-hydroxy benzoate to 2-octaprenylphenol, an intermediate step in ubiquinone biosynthesis. This is 3-octaprenyl-4-hydroxybenzoate carboxy-lyase from Ralstonia nicotianae (strain ATCC BAA-1114 / GMI1000) (Ralstonia solanacearum).